The chain runs to 314 residues: Oxaloacetate tautomerase FAHD2B, mitochondrial (314 aa).

The N-terminal 84 residues, 1–84, are a transit peptide targeting the mitochondrion; it reads MLGSSGRRLL…ATLSVVRRAL (84 aa). Positions 159, 161, and 190 each coordinate Mg(2+). Lys-203 carries the N6-acetyllysine; alternate modification. Lys-203 carries the post-translational modification N6-succinyllysine; alternate. Lys-234 carries the post-translational modification N6-acetyllysine.

This sequence belongs to the FAH family. Mg(2+) serves as cofactor. The cofactor is Mn(2+).

It localises to the mitochondrion. It catalyses the reaction oxaloacetate = enol-oxaloacetate. Functionally, tautomerase that converts enol-oxaloacetate, a strong inhibitor of succinate dehydrogenase, to the physiological keto form of oxaloacetate. It is thereby required to maximize aerobic respiration efficiency by preventing succinate dehydrogenase inhibition. In Bos taurus (Bovine), this protein is Oxaloacetate tautomerase FAHD2B, mitochondrial.